A 1154-amino-acid polypeptide reads, in one-letter code: Chromosome partition protein Smc (1154 aa).

32–39 (PNGCGKSN) lines the ATP pocket. Coiled-coil stretches lie at residues 170-215 (VAGL…ARQA), 282-505 (LREA…LNGE), and 627-993 (AARR…EARE).

It belongs to the SMC family. As to quaternary structure, homodimer.

It is found in the cytoplasm. In terms of biological role, required for chromosome condensation and partitioning. This Rhodopseudomonas palustris (strain ATCC BAA-98 / CGA009) protein is Chromosome partition protein Smc.